A 376-amino-acid polypeptide reads, in one-letter code: 28S rRNA (uridine-N(3))-methyltransferase (376 aa).

Disordered regions lie at residues 1-33 (MAERGRKRPCGPGEHGQRIEWRKWKQQKKEEKK) and 49-71 (AQEEQAKRLEEEEAAAEKEDRGR). Over residues 15-33 (HGQRIEWRKWKQQKKEEKK) the composition is skewed to basic and acidic residues. 5 residues coordinate S-adenosyl-L-homocysteine: Thr-289, Arg-292, Gly-312, Asn-341, and Thr-342. Residues Arg-292, Gly-312, Asn-341, and Thr-342 each coordinate S-adenosyl-L-methionine.

The protein belongs to the class IV-like SAM-binding methyltransferase superfamily. In terms of assembly, interacts with INCA1.

Its subcellular location is the cytoplasm. It is found in the cytoskeleton. The protein resides in the spindle. The protein localises to the chromosome. It localises to the centromere. Its subcellular location is the kinetochore. It is found in the microtubule organizing center. The protein resides in the centrosome. It catalyses the reaction uridine in 28S rRNA + S-adenosyl-L-methionine = N(3)-methyluridine in 28S rRNA + S-adenosyl-L-homocysteine + H(+). Functionally, S-adenosyl-L-methionine-dependent methyltransferase that specifically methylates the N3 position of a uridine in 28S rRNA. Required for association of the centrosomes with the poles of the bipolar mitotic spindle during metaphase. Also involved in chromosome alignment. May promote centrosome maturation probably by recruiting A-kinase anchor protein AKAP9 to centrosomes in early mitosis. Binds specifically to miRNA MIR145 hairpin, regulates MIR145 expression at a postranscriptional level. This chain is 28S rRNA (uridine-N(3))-methyltransferase, found in Homo sapiens (Human).